The sequence spans 365 residues: Peptide chain release factor 2 (365 aa).

An N5-methylglutamine modification is found at Gln252.

Belongs to the prokaryotic/mitochondrial release factor family. Methylated by PrmC. Methylation increases the termination efficiency of RF2.

The protein resides in the cytoplasm. Functionally, peptide chain release factor 2 directs the termination of translation in response to the peptide chain termination codons UGA and UAA. The chain is Peptide chain release factor 2 from Yersinia enterocolitica serotype O:8 / biotype 1B (strain NCTC 13174 / 8081).